Here is a 1061-residue protein sequence, read N- to C-terminus: MLFSLTDTMDSSRLYALISRFRPSRAEIWTCRSRGTVTLSVLAFEDPNGSGNAAEEEEDERQLPSGIDFPICFLVRGRQVHLIQQIQPVQRCEHCARFYKHQHECSVRRRDFYFHHINSHSSNWWQEIHFFPIGSHPRTERLFITYDVETYTWMGAFGKQLVPFMLVMKLSGDDNLVKHALQLALELGWDQWEKDSTTFYCLTPEKMKVGQQFRTYRNRLQTSLATDLWMTFLQKNPHLSQWAQEENGLVALEDLSYEDLKRAPAIKGEPRFVELYIVGHNINGFDEIVLAAQVINNRLDVPGPFKISRNFIPRAGKILFNDITFALPNPHYKKRTNFLLWEHGGCDDQDFKYQYLKVMVRDTFALTHTSLRKAAQAYALPVEKGCCPYKAVNQFYMLGSYRADANGFPLEEYWKDKEEYLLNQELWKKKGEKNYNLIGETLNYCALDVLVTASLVEKLRSSYAQFVTDAVGLDAAHFNVFQRPTISSNSHAIFRQILYRAEKPQRTHLGPNILAPSHELYDYVRASIRGGRCYPTYIGVLKEPIYVYDICGMYASALTHPMPWGPPLNPYERALAVRQWQVALENYTCKIDYFDKNLCPGIFTIDADPPDENQLDVLPPFCSRKGGRLAWTNESLRGEVVTSVDLVTLHNRGWRLRLLSDERTTIFPTWKCLAREYVQLNIAAKERADRDKNQTLRSIAKLLSNALYGSFATKLDNKKIVFSDQMEESLMKEIAAGRLNIKSSSFIETDTLSTEVMPAFERVYSPNQLALVNSEAEESDEDQGPAPFYSPPPENCEHVTYTYKPITFMDAEEGDMCLHTLESSNPLINNDRYPSHVASFVLAWTRAFVSEWSEFLYEEDRGIPLKDRPLKSVYGDTDSLFVTEKGRRLMESQGKKRIKKYGGKLVFDPSCPELTWSVECETVCSYCGADAYSPESVFLAPKLYALKCLQCPHCGSTSKGKIRAKGHATEALSYDLMLKCYLAEAQGEDTRFSTSRLSLKRTLASAQPGAHPFTVTETTLTRTLRPWKDKTLVHLDAHRLVPYSNSQPNPRNEEVCWIEMA.

The tract at residues 773–792 (NSEAEESDEDQGPAPFYSPP) is disordered.

It belongs to the DNA polymerase type-B family. Heterodimer with the terminal protein; this heterodimer binds to bp 9 to 18 of the genome. Forms a complex with viral pTP, DBP and hosts NFIA and POU2F1/OCT1 for initiation of replication.

Its subcellular location is the host nucleus. It carries out the reaction DNA(n) + a 2'-deoxyribonucleoside 5'-triphosphate = DNA(n+1) + diphosphate. In terms of biological role, eukaryotic-type DNA polymerase involved in viral genomic replication. DNA synthesis is protein primed, and acts in a strand displacement replication. Assembles in complex with viral pTP, DBP, host NFIA and host POU2F1/OCT1 on viral origin of replication. The polymerase covalently transfers dCMP onto pTP, thereby initiating complementary strand synthesis. This Human adenovirus A serotype 12 (HAdV-12) protein is DNA polymerase.